Consider the following 464-residue polypeptide: Asparagine--tRNA ligase (464 aa).

The protein belongs to the class-II aminoacyl-tRNA synthetase family. In terms of assembly, homodimer.

It localises to the cytoplasm. It catalyses the reaction tRNA(Asn) + L-asparagine + ATP = L-asparaginyl-tRNA(Asn) + AMP + diphosphate + H(+). In Clostridium botulinum (strain Alaska E43 / Type E3), this protein is Asparagine--tRNA ligase.